A 234-amino-acid polypeptide reads, in one-letter code: 2,3,4,5-tetrahydropyridine-2,6-dicarboxylate N-acetyltransferase (234 aa).

The protein belongs to the transferase hexapeptide repeat family. DapH subfamily.

The enzyme catalyses (S)-2,3,4,5-tetrahydrodipicolinate + acetyl-CoA + H2O = L-2-acetamido-6-oxoheptanedioate + CoA. Its pathway is amino-acid biosynthesis; L-lysine biosynthesis via DAP pathway; LL-2,6-diaminopimelate from (S)-tetrahydrodipicolinate (acetylase route): step 1/3. Catalyzes the transfer of an acetyl group from acetyl-CoA to tetrahydrodipicolinate. The chain is 2,3,4,5-tetrahydropyridine-2,6-dicarboxylate N-acetyltransferase from Lacticaseibacillus casei (strain BL23) (Lactobacillus casei).